Reading from the N-terminus, the 130-residue chain is Small ribosomal subunit protein uS8 (130 aa).

The protein belongs to the universal ribosomal protein uS8 family. As to quaternary structure, part of the 30S ribosomal subunit. Contacts proteins S5 and S12.

One of the primary rRNA binding proteins, it binds directly to 16S rRNA central domain where it helps coordinate assembly of the platform of the 30S subunit. This Glaesserella parasuis serovar 5 (strain SH0165) (Haemophilus parasuis) protein is Small ribosomal subunit protein uS8.